The primary structure comprises 331 residues: Glucan endo-1,3-beta-glucosidase, acidic isoform GL161 (331 aa).

Residues 1–9 form the signal peptide; that stretch reads MCSIQIIGA. At Gln10 the chain carries Pyrrolidone carboxylic acid. Asn55 and Asn75 each carry an N-linked (GlcNAc...) asparagine glycan. The Nucleophile role is filled by Glu244.

It belongs to the glycosyl hydrolase 17 family. Is expressed primarily in epidermal cell of healthy plant, and following induction by ethylene, accumulates in mesophyll cells.

The protein localises to the secreted. The protein resides in the extracellular space. It catalyses the reaction Hydrolysis of (1-&gt;3)-beta-D-glucosidic linkages in (1-&gt;3)-beta-D-glucans.. Is thought to be an important plant defense-related product against fungal pathogens. This Nicotiana tabacum (Common tobacco) protein is Glucan endo-1,3-beta-glucosidase, acidic isoform GL161.